The primary structure comprises 319 residues: ATP-dependent 6-phosphofructokinase (319 aa).

An ATP-binding site is contributed by G11. 21 to 25 (RAVVR) contacts ADP. ATP is bound by residues 72–73 (RC) and 102–105 (GDGS). D103 contacts Mg(2+). 125-127 (TID) serves as a coordination point for substrate. D127 serves as the catalytic Proton acceptor. R154 is an ADP binding site. Substrate-binding positions include R162 and 169-171 (MGR). ADP-binding positions include 185–187 (GAE), R211, and 213–215 (KKH). Substrate is bound by residues E222, R243, and 249 to 252 (HIQR).

It belongs to the phosphofructokinase type A (PFKA) family. ATP-dependent PFK group I subfamily. Prokaryotic clade 'B1' sub-subfamily. As to quaternary structure, homotetramer. Mg(2+) is required as a cofactor.

Its subcellular location is the cytoplasm. It carries out the reaction beta-D-fructose 6-phosphate + ATP = beta-D-fructose 1,6-bisphosphate + ADP + H(+). It participates in carbohydrate degradation; glycolysis; D-glyceraldehyde 3-phosphate and glycerone phosphate from D-glucose: step 3/4. Allosterically activated by ADP and other diphosphonucleosides, and allosterically inhibited by phosphoenolpyruvate. Catalyzes the phosphorylation of D-fructose 6-phosphate to fructose 1,6-bisphosphate by ATP, the first committing step of glycolysis. The polypeptide is ATP-dependent 6-phosphofructokinase (Halalkalibacterium halodurans (strain ATCC BAA-125 / DSM 18197 / FERM 7344 / JCM 9153 / C-125) (Bacillus halodurans)).